We begin with the raw amino-acid sequence, 193 residues long: MKLLHLDSSALGANSISRELSAAVVEQQRRLHPEVDVSYRDLDRDPIPHLTAQTLAQTDPAEAAAAEAVMQQFLQADVIVIGAPMYNFAIPSTLKAWIDRIAVAGRTFQYTANGPEGLAGGKRVIIASARGGLYADPTNDFQEPYLRQVLGFLGVDDISFVRAEGVAYSPQHRADALASALAGLSEEEAAAGA.

Residues serine 9, 15-17 (SIS), and 85-88 (MYNF) contribute to the FMN site.

The protein belongs to the azoreductase type 1 family. Homodimer. It depends on FMN as a cofactor.

The catalysed reaction is 2 a quinone + NADH + H(+) = 2 a 1,4-benzosemiquinone + NAD(+). It catalyses the reaction N,N-dimethyl-1,4-phenylenediamine + anthranilate + 2 NAD(+) = 2-(4-dimethylaminophenyl)diazenylbenzoate + 2 NADH + 2 H(+). Quinone reductase that provides resistance to thiol-specific stress caused by electrophilic quinones. Its function is as follows. Also exhibits azoreductase activity. Catalyzes the reductive cleavage of the azo bond in aromatic azo compounds to the corresponding amines. In Xanthomonas axonopodis pv. citri (strain 306), this protein is FMN-dependent NADH:quinone oxidoreductase 1.